The primary structure comprises 404 residues: MRASPHVLGIVLAGGEGKRLYPLTADRAKPAVPFGGAYRLIDFVLSNLVNARFLRICVLTQYKSHSLDRHISQNWRLSGLAGEYITPVPAQQRLGPRWYTGSADAIHQSLNLIFDEDPEYIVVFGADHVYRMDPEQMLDFHIESGAAVTVAGIRVPRTEASAFGCIDADDTGRIREFVEKPANPPGTPDDPDAAFVSMGNYIFTTKELIDVIRADADDDHSDHDMGGDIIPRLVADGRAAVYDFNTNLVPGATERDHAYWRDVGTLDAFYDAHMDLVSVHPVFNLYNRRWPIRGESENLAPAKFVNGGSAQESVVGAGSIVSAASVRNSVLSSNVVIDDGAVVEGSVLMPGVRVGRGAVVRHAILDKNVVVGVGEQVGVDIERDRERFNVSAGGVVAVGKGVWI.

Residues Tyr99, Gly164, 179-180 (EK), and Ser197 contribute to the alpha-D-glucose 1-phosphate site.

This sequence belongs to the bacterial/plant glucose-1-phosphate adenylyltransferase family.

The catalysed reaction is alpha-D-glucose 1-phosphate + ATP + H(+) = ADP-alpha-D-glucose + diphosphate. The protein operates within capsule biogenesis; capsule polysaccharide biosynthesis. It participates in glycan biosynthesis; glycogen biosynthesis. Functionally, involved in the biosynthesis of ADP-glucose, a building block, required in the biosynthesis of maltose-1-phosphate (M1P) and in the elongation reactions to produce linear alpha-1,4-glucans. Catalyzes the reaction between ATP and alpha-D-glucose 1-phosphate (G1P) to produce pyrophosphate and ADP-Glc. In Mycobacteroides abscessus (strain ATCC 19977 / DSM 44196 / CCUG 20993 / CIP 104536 / JCM 13569 / NCTC 13031 / TMC 1543 / L948) (Mycobacterium abscessus), this protein is Glucose-1-phosphate adenylyltransferase.